The primary structure comprises 436 residues: Trigger factor (436 aa).

In terms of domain architecture, PPIase FKBP-type spans 163-248 (GDRVVLDFAG…VKEVAEGVLP (86 aa)).

It belongs to the FKBP-type PPIase family. Tig subfamily.

The protein localises to the cytoplasm. The enzyme catalyses [protein]-peptidylproline (omega=180) = [protein]-peptidylproline (omega=0). Functionally, involved in protein export. Acts as a chaperone by maintaining the newly synthesized protein in an open conformation. Functions as a peptidyl-prolyl cis-trans isomerase. In Bordetella bronchiseptica (strain ATCC BAA-588 / NCTC 13252 / RB50) (Alcaligenes bronchisepticus), this protein is Trigger factor.